Here is a 300-residue protein sequence, read N- to C-terminus: 4-hydroxy-tetrahydrodipicolinate synthase (300 aa).

Thr46 serves as a coordination point for pyruvate. Tyr134 acts as the Proton donor/acceptor in catalysis. Lys162 (schiff-base intermediate with substrate) is an active-site residue. A pyruvate-binding site is contributed by Ile207.

It belongs to the DapA family. As to quaternary structure, homotetramer; dimer of dimers.

It localises to the cytoplasm. It catalyses the reaction L-aspartate 4-semialdehyde + pyruvate = (2S,4S)-4-hydroxy-2,3,4,5-tetrahydrodipicolinate + H2O + H(+). Its pathway is amino-acid biosynthesis; L-lysine biosynthesis via DAP pathway; (S)-tetrahydrodipicolinate from L-aspartate: step 3/4. Its function is as follows. Catalyzes the condensation of (S)-aspartate-beta-semialdehyde [(S)-ASA] and pyruvate to 4-hydroxy-tetrahydrodipicolinate (HTPA). The protein is 4-hydroxy-tetrahydrodipicolinate synthase of Protochlamydia amoebophila (strain UWE25).